The sequence spans 98 residues: Guanine nucleotide-binding protein subunit gamma 1 (98 aa).

The region spanning 19–98 is the G protein gamma domain; sequence GKHRILAELA…GGEGCRCLIL (80 aa). The stretch at 20-50 forms a coiled coil; that stretch reads KHRILAELARVEQEVAFLEKELKEVENTDIV. The interval 88-94 is regulates lipidation and cell membrane subcellular localization; the sequence is NGGEGCR. A lipid anchor (S-palmitoyl cysteine) is attached at Cys-93. Position 95 is a cysteine methyl ester (Cys-95). A lipid anchor (S-farnesyl cysteine) is attached at Cys-95. A propeptide spans 96 to 98 (removed in mature form); that stretch reads LIL.

G proteins are composed of 3 units, alpha, beta and gamma. Interacts with the beta subunit GB1. The dimer GB1-GG1 interacts with NDL1, NDL2 and NDL3. Binds to NUDT7. As to expression, mostly expressed in seedlings (especially at the hypocotyl/root junction), young cauline leaves, open flowers, and floral stems, and, to a lower extent, in roots (restricted to the stele), rosette leaves (restricted to veins), siliques, and unopened floral buds. Also present in hydathods.

It is found in the cell membrane. It localises to the golgi apparatus membrane. Its subcellular location is the golgi apparatus. The protein localises to the trans-Golgi network membrane. The protein resides in the cytoplasm. In terms of biological role, guanine nucleotide-binding proteins (G proteins) are involved as a modulator or transducer in various transmembrane signaling systems. The beta and gamma chains are required for the GTPase activity, for replacement of GDP by GTP, and for G protein-effector interaction. Involved in the abscisic acid (ABA) and ethylene signaling pathways. Regulates acropetal transport of auxin (IAA) in roots and hypocotyls, and thus modulates root architecture (e.g. lateral root formation). The heterotrimeric G-protein controls defense responses to necrotrophic and vascular fungi probably by modulating cell wall-related genes expression; involved in resistance to fungal pathogens such as Alternaria brassicicola, Plectosphaerella cucumerina and Fusarium oxysporum. The sequence is that of Guanine nucleotide-binding protein subunit gamma 1 (GG1) from Arabidopsis thaliana (Mouse-ear cress).